A 185-amino-acid polypeptide reads, in one-letter code: GTP cyclohydrolase 1 (185 aa).

3 residues coordinate Zn(2+): Cys75, His78, and Cys146.

This sequence belongs to the GTP cyclohydrolase I family. Toroid-shaped homodecamer, composed of two pentamers of five dimers.

The catalysed reaction is GTP + H2O = 7,8-dihydroneopterin 3'-triphosphate + formate + H(+). Its pathway is cofactor biosynthesis; 7,8-dihydroneopterin triphosphate biosynthesis; 7,8-dihydroneopterin triphosphate from GTP: step 1/1. In Methylococcus capsulatus (strain ATCC 33009 / NCIMB 11132 / Bath), this protein is GTP cyclohydrolase 1.